The sequence spans 99 residues: Malonate decarboxylase acyl carrier protein (99 aa).

O-(phosphoribosyl dephospho-coenzyme A)serine is present on serine 25.

In terms of processing, covalently binds the prosthetic group of malonate decarboxylase.

It is found in the cytoplasm. Its function is as follows. Subunit of malonate decarboxylase, it is an acyl carrier protein to which acetyl and malonyl thioester residues are bound via a 2'-(5''-phosphoribosyl)-3'-dephospho-CoA prosthetic group and turn over during the catalytic mechanism. In Klebsiella pneumoniae, this protein is Malonate decarboxylase acyl carrier protein (mdcC).